We begin with the raw amino-acid sequence, 234 residues long: MPVFRLTEELIFPPSYLAERDGLLAVGGDLSAERLLLAYRQGIFPWYTEKTPILWWSPDPRLVLFPAELKISISLRRVLRKNVFSVTFDRAFADVIRRCAEVRRARDDSTWIVPGMVTAYSRLHRLGYAHSVESWHEGELVGGLYGVALGRVFYGESMFTRKTDASKVALVHLVDLLTRGGFQLIDCQVTTAHLQSMGAREISRRRFLTLLAENIPEVVHGESWEGESCCGKRP.

Belongs to the L/F-transferase family.

The protein resides in the cytoplasm. The enzyme catalyses N-terminal L-lysyl-[protein] + L-leucyl-tRNA(Leu) = N-terminal L-leucyl-L-lysyl-[protein] + tRNA(Leu) + H(+). It carries out the reaction N-terminal L-arginyl-[protein] + L-leucyl-tRNA(Leu) = N-terminal L-leucyl-L-arginyl-[protein] + tRNA(Leu) + H(+). It catalyses the reaction L-phenylalanyl-tRNA(Phe) + an N-terminal L-alpha-aminoacyl-[protein] = an N-terminal L-phenylalanyl-L-alpha-aminoacyl-[protein] + tRNA(Phe). In terms of biological role, functions in the N-end rule pathway of protein degradation where it conjugates Leu, Phe and, less efficiently, Met from aminoacyl-tRNAs to the N-termini of proteins containing an N-terminal arginine or lysine. This chain is Leucyl/phenylalanyl-tRNA--protein transferase, found in Syntrophobacter fumaroxidans (strain DSM 10017 / MPOB).